A 220-amino-acid chain; its full sequence is Homeobox-leucine zipper protein ATHB-21 (220 aa).

The tract at residues 26-48 (VPQQGGEAKPTRRRKRKSKSVVV) is disordered. The segment at residues 58–117 (GWFRKRKLSDEQVRMLEISFEDDHKLESERKDRLASELGLDPRQVAVWFQNRRARWKNKR) is a DNA-binding region (homeobox). The interval 118-146 (VEDEYTKLKNAYETTVVEKCRLDSEVIHL) is leucine-zipper.

The protein belongs to the HD-ZIP homeobox family. Class I subfamily. As to expression, widely expressed.

It is found in the nucleus. Probable transcription factor. This Arabidopsis thaliana (Mouse-ear cress) protein is Homeobox-leucine zipper protein ATHB-21 (ATHB-21).